The primary structure comprises 770 residues: Probable copper-exporting P-type ATPase V (770 aa).

Residues 1–66 form the HMA domain; it reads MRVCVTGFNV…AITKAQHVPA (66 aa). Positions 103–130 are disordered; sequence DKPLKASRCGGRPRGPVRGSASWPGEQN. Low complexity predominate over residues 110–121; that stretch reads RCGGRPRGPVRG. Helical transmembrane passes span 141 to 161, 164 to 184, 193 to 213, 217 to 237, 377 to 397, and 402 to 422; these read VWLA…FGAY, AGWL…WPIL, ALTS…FVYS, LFAG…FVVL, AVFV…WTLI, and VAGM…ALGL. Asp-460 (4-aspartylphosphate intermediate) is an active-site residue. Residues Asp-660 and Asp-664 each coordinate Mg(2+). The next 2 membrane-spanning stretches (helical) occupy residues 718 to 737 and 741 to 760; these read LGWA…LGAL and VAGA…SLRL.

It belongs to the cation transport ATPase (P-type) (TC 3.A.3) family. Type IB subfamily.

The protein resides in the cell membrane. It carries out the reaction Cu(+)(in) + ATP + H2O = Cu(+)(out) + ADP + phosphate + H(+). Its function is as follows. Necessary for copper homeostasis and likely functions as a copper exporter. Also required for full virulence. The chain is Probable copper-exporting P-type ATPase V (ctpV) from Mycobacterium tuberculosis (strain CDC 1551 / Oshkosh).